Here is a 312-residue protein sequence, read N- to C-terminus: Acetyl-coenzyme A carboxylase carboxyl transferase subunit alpha (312 aa).

The CoA carboxyltransferase C-terminal domain occupies 36–286 (ELEKEIEKTF…KTYFLESVKA (251 aa)).

This sequence belongs to the AccA family. As to quaternary structure, acetyl-CoA carboxylase is a heterohexamer composed of biotin carboxyl carrier protein (AccB), biotin carboxylase (AccC) and two subunits each of ACCase subunit alpha (AccA) and ACCase subunit beta (AccD).

It localises to the cytoplasm. It carries out the reaction N(6)-carboxybiotinyl-L-lysyl-[protein] + acetyl-CoA = N(6)-biotinyl-L-lysyl-[protein] + malonyl-CoA. It functions in the pathway lipid metabolism; malonyl-CoA biosynthesis; malonyl-CoA from acetyl-CoA: step 1/1. In terms of biological role, component of the acetyl coenzyme A carboxylase (ACC) complex. First, biotin carboxylase catalyzes the carboxylation of biotin on its carrier protein (BCCP) and then the CO(2) group is transferred by the carboxyltransferase to acetyl-CoA to form malonyl-CoA. The chain is Acetyl-coenzyme A carboxylase carboxyl transferase subunit alpha from Sulfurovum sp. (strain NBC37-1).